A 315-amino-acid polypeptide reads, in one-letter code: 6-phosphogluconolactonase-like protein 2 (315 aa).

Phosphoserine is present on residues Ser42 and Ser64. The disordered stretch occupies residues 59–85 (CKSTASAAEGKSGSSGSGSGSSKPKKE). Residues 60–70 (KSTASAAEGKS) are compositionally biased toward low complexity.

This sequence belongs to the glucosamine/galactosamine-6-phosphate isomerase family. 6-phosphogluconolactonase subfamily.

It localises to the cytoplasm. In terms of biological role, may be involved in regulation of tRNA subcellular distribution. The polypeptide is 6-phosphogluconolactonase-like protein 2 (SOL2) (Saccharomyces cerevisiae (strain ATCC 204508 / S288c) (Baker's yeast)).